The sequence spans 207 residues: Phenazine biosynthesis protein PhzD1 (207 aa).

The active-site Proton donor is Asp38. Residues Gln78, Arg87, Lys122, and 151 to 155 (YAHVG) contribute to the substrate site.

This sequence belongs to the isochorismatase family. Homodimer.

It carries out the reaction (2S)-2-amino-4-deoxychorismate + H2O = (5S,6S)-6-amino-5-hydroxycyclohexa-1,3-diene-1-carboxyate + pyruvate. The protein operates within antibiotic biosynthesis; phenazine biosynthesis. Involved in the biosynthesis of the antibiotic phenazine, a nitrogen-containing heterocyclic molecule. PhzD1 (operon phzA1B1C1E1F1G1) has a role in the biosynthesis of the phenazine during planktonic growth. Catalyzes the hydrolysis of the vinyl ether functional group of 2-amino-2-deoxyisochorismate (ADIC), yielding pyruvate and trans-2,3-dihydro-3-hydroxyanthranilic acid (DHHA). Also able to act on isochorismate, chorismate and 4-amino-4-deoxychorismate (ADC) as substrates. The protein is Phenazine biosynthesis protein PhzD1 of Pseudomonas aeruginosa (strain ATCC 15692 / DSM 22644 / CIP 104116 / JCM 14847 / LMG 12228 / 1C / PRS 101 / PAO1).